The chain runs to 534 residues: ATP synthase subunit beta 2 (534 aa).

185 to 192 (GGAGVGKT) is an ATP binding site. Residues 494–505 (AAAREADARREA) show a composition bias toward basic and acidic residues. The tract at residues 494–534 (AAAREADARREAAAAASGAGPGTTSDPASGSAEPQGARHGR) is disordered.

It belongs to the ATPase alpha/beta chains family. As to quaternary structure, F-type ATPases have 2 components, CF(1) - the catalytic core - and CF(0) - the membrane proton channel. CF(1) has five subunits: alpha(3), beta(3), gamma(1), delta(1), epsilon(1). CF(0) has three main subunits: a(1), b(2) and c(9-12). The alpha and beta chains form an alternating ring which encloses part of the gamma chain. CF(1) is attached to CF(0) by a central stalk formed by the gamma and epsilon chains, while a peripheral stalk is formed by the delta and b chains.

It is found in the cell inner membrane. It carries out the reaction ATP + H2O + 4 H(+)(in) = ADP + phosphate + 5 H(+)(out). Produces ATP from ADP in the presence of a proton gradient across the membrane. The catalytic sites are hosted primarily by the beta subunits. In Burkholderia mallei (strain NCTC 10247), this protein is ATP synthase subunit beta 2.